Consider the following 512-residue polypeptide: Vacuolar protein sorting-associated protein 30 (512 aa).

A BARA region spans residues 294–511 (TNIYNESFRI…LVFCSSKLSL (218 aa)).

This sequence belongs to the beclin family. In terms of assembly, component of the autophagy-specific VPS34 PI3-kinase complex I composed of VPS15, VPS30, VPS34, ATG14 and ATG38; and of the VPS34 PI3-kinase complex II composed of VPS15, VPS30, VPS34 and VPS38.

The protein localises to the endosome membrane. Its subcellular location is the vacuole membrane. The protein resides in the preautophagosomal structure membrane. Its function is as follows. Required for cytoplasm to vacuole transport (Cvt), autophagy, nucleophagy, and mitophagy, as a part of the autophagy-specific VPS34 PI3-kinase complex I. This complex is essential to recruit the ATG8-phosphatidylinositol conjugate and the ATG12-ATG5 conjugate to the pre-autophagosomal structure. Also involved in endosome-to-Golgi retrograde transport as part of the VPS34 PI3-kinase complex II. This second complex is required for the endosome-to-Golgi retrieval of PEP1 and KEX2, and the recruitment of VPS5 and VPS7, two components of the retromer complex, to endosomal membranes (probably through the synthesis of a specific pool of phosphatidylinositol 3-phosphate recruiting the retromer to the endosomes). Required for survival and/or proliferation in kidneys but not brain. The chain is Vacuolar protein sorting-associated protein 30 from Candida glabrata (strain ATCC 2001 / BCRC 20586 / JCM 3761 / NBRC 0622 / NRRL Y-65 / CBS 138) (Yeast).